Consider the following 182-residue polypeptide: Transcription antitermination protein NusB (182 aa).

Residues 159–182 are disordered; it reads TPVENSEAEAAGYPVEESIEEDSQ.

This sequence belongs to the NusB family.

In terms of biological role, involved in transcription antitermination. Required for transcription of ribosomal RNA (rRNA) genes. Binds specifically to the boxA antiterminator sequence of the ribosomal RNA (rrn) operons. This Corynebacterium diphtheriae (strain ATCC 700971 / NCTC 13129 / Biotype gravis) protein is Transcription antitermination protein NusB.